A 232-amino-acid polypeptide reads, in one-letter code: Putative dimethylsulfoniopropionate lyase DddL (232 aa).

A divalent metal cation contacts are provided by H154, E159, Y161, and H190.

It belongs to the non-heme iron-dependent dioxygenase family. In terms of assembly, homodimer. It depends on a divalent metal cation as a cofactor.

The enzyme catalyses S,S-dimethyl-beta-propiothetin = acrylate + dimethyl sulfide + H(+). Functionally, may cleave dimethylsulfoniopropionate (DMSP), releasing dimethyl sulfide (DMS). DMS is the principal form by which sulfur is transported from oceans to the atmosphere. The real activity of the protein is however subject to debate and it is unclear whether it constitutes a real dimethylsulfoniopropionate lyase in vivo. This is Putative dimethylsulfoniopropionate lyase DddL (dddL) from Cereibacter sphaeroides (strain ATCC 17023 / DSM 158 / JCM 6121 / CCUG 31486 / LMG 2827 / NBRC 12203 / NCIMB 8253 / ATH 2.4.1.) (Rhodobacter sphaeroides).